We begin with the raw amino-acid sequence, 147 residues long: Cyanate hydratase (147 aa).

Active-site residues include R88, E91, and S114.

The protein belongs to the cyanase family.

The enzyme catalyses cyanate + hydrogencarbonate + 3 H(+) = NH4(+) + 2 CO2. Catalyzes the reaction of cyanate with bicarbonate to produce ammonia and carbon dioxide. The chain is Cyanate hydratase from Prochlorococcus marinus subsp. pastoris (strain CCMP1986 / NIES-2087 / MED4).